We begin with the raw amino-acid sequence, 317 residues long: Apolipoprotein E (317 aa).

The N-terminal stretch at 1–18 (MKVLWAALLVTFLAGCQA) is a signal peptide. A run of 8 repeats spans residues 80-101 (TLMDETMKELKAYKSELEEQLS), 102-123 (PVAEETRARLSKELQAAQARLG), 124-145 (ADMEDVRSRLVQYRSELQAMLG), 146-167 (QSTEELRARLASHLRKLRKRLL), 168-189 (RDADDLQKRLAVYQAGAREGAE), 190-211 (RGVSAIRERLGPLVEQGRVRAA), 212-233 (TVGSLASQPLQERAQALGERLR), and 234-255 (ARMEEMGSRTRDRLDEVKEQVA). Residues 80–255 (TLMDETMKEL…RLDEVKEQVA (176 aa)) form an 8 X 22 AA approximate tandem repeats region. Met-143 bears the Methionine sulfoxide mark. Residue Ser-147 is modified to Phosphoserine. Positions 158 to 168 (HLRKLRKRLLR) are LDL and other lipoprotein receptors binding. 162-165 (LRKR) contributes to the heparin binding site. A lipid-binding and lipoprotein association region spans residues 210-290 (AATVGSLASQ…SWFEPLVEDM (81 aa)). 229–236 (GERLRARM) serves as a coordination point for heparin. The interval 266 to 317 (QQISLQAEAFQARLKSWFEPLVEDMQRQWAGLVEKVQAAVGASTAPVPSDNH) is homooligomerization. Residues 278 to 290 (RLKSWFEPLVEDM) are specificity for association with VLDL.

Belongs to the apolipoprotein A1/A4/E family. As to quaternary structure, homotetramer. May interact with ABCA1; functionally associated with ABCA1 in the biogenesis of HDLs. May interact with APP/A4 amyloid-beta peptide; the interaction is extremely stable in vitro but its physiological significance is unclear. May interact with MAPT. May interact with MAP2. In the cerebrospinal fluid, interacts with secreted SORL1. Interacts with PMEL; this allows the loading of PMEL luminal fragment on ILVs to induce fibril nucleation. APOE exists as multiple glycosylated and sialylated glycoforms within cells and in plasma. The extent of glycosylation and sialylation are tissue and context specific. Post-translationally, glycated in plasma VLDL. In terms of processing, phosphorylated by FAM20C in the extracellular medium.

It localises to the secreted. The protein localises to the extracellular space. The protein resides in the extracellular matrix. Its subcellular location is the extracellular vesicle. It is found in the endosome. It localises to the multivesicular body. Its function is as follows. APOE is an apolipoprotein, a protein associating with lipid particles, that mainly functions in lipoprotein-mediated lipid transport between organs via the plasma and interstitial fluids. APOE is a core component of plasma lipoproteins and is involved in their production, conversion and clearance. Apolipoproteins are amphipathic molecules that interact both with lipids of the lipoprotein particle core and the aqueous environment of the plasma. As such, APOE associates with chylomicrons, chylomicron remnants, very low density lipoproteins (VLDL) and intermediate density lipoproteins (IDL) but shows a preferential binding to high-density lipoproteins (HDL). It also binds a wide range of cellular receptors including the LDL receptor/LDLR, the LDL receptor-related proteins LRP1, LRP2 and LRP8 and the very low-density lipoprotein receptor/VLDLR that mediate the cellular uptake of the APOE-containing lipoprotein particles. Finally, APOE also has a heparin-binding activity and binds heparan-sulfate proteoglycans on the surface of cells, a property that supports the capture and the receptor-mediated uptake of APOE-containing lipoproteins by cells. A main function of APOE is to mediate lipoprotein clearance through the uptake of chylomicrons, VLDLs, and HDLs by hepatocytes. APOE is also involved in the biosynthesis by the liver of VLDLs as well as their uptake by peripheral tissues ensuring the delivery of triglycerides and energy storage in muscle, heart and adipose tissues. By participating in the lipoprotein-mediated distribution of lipids among tissues, APOE plays a critical role in plasma and tissues lipid homeostasis. APOE is also involved in two steps of reverse cholesterol transport, the HDLs-mediated transport of cholesterol from peripheral tissues to the liver, and thereby plays an important role in cholesterol homeostasis. First, it is functionally associated with ABCA1 in the biogenesis of HDLs in tissues. Second, it is enriched in circulating HDLs and mediates their uptake by hepatocytes. APOE also plays an important role in lipid transport in the central nervous system, regulating neuron survival and sprouting. This Theropithecus gelada (Gelada baboon) protein is Apolipoprotein E (APOE).